Here is a 282-residue protein sequence, read N- to C-terminus: 4-diphosphocytidyl-2-C-methyl-D-erythritol kinase (282 aa).

The active site involves K13. 96–106 is an ATP binding site; the sequence is PMGGGIGGGSS. Residue D138 is part of the active site.

The protein belongs to the GHMP kinase family. IspE subfamily.

It carries out the reaction 4-CDP-2-C-methyl-D-erythritol + ATP = 4-CDP-2-C-methyl-D-erythritol 2-phosphate + ADP + H(+). Its pathway is isoprenoid biosynthesis; isopentenyl diphosphate biosynthesis via DXP pathway; isopentenyl diphosphate from 1-deoxy-D-xylulose 5-phosphate: step 3/6. Its function is as follows. Catalyzes the phosphorylation of the position 2 hydroxy group of 4-diphosphocytidyl-2C-methyl-D-erythritol. The chain is 4-diphosphocytidyl-2-C-methyl-D-erythritol kinase from Pseudomonas syringae pv. tomato (strain ATCC BAA-871 / DC3000).